The following is a 134-amino-acid chain: uncharacterized protein (134 aa).

This is an uncharacterized protein from Archaeoglobus fulgidus (strain ATCC 49558 / DSM 4304 / JCM 9628 / NBRC 100126 / VC-16).